Here is a 28-residue protein sequence, read N- to C-terminus: Humanin-like 4 (28 aa).

This sequence belongs to the humanin family. In terms of tissue distribution, highly expressed in testis. Also expressed in kidney, heart, skeletal muscles and brain.

It is found in the secreted. Its subcellular location is the cytoplasm. Plays a role as a neuroprotective and antiapoptotic factor. The protein is Humanin-like 4 of Homo sapiens (Human).